The following is a 193-amino-acid chain: AP-3 complex subunit sigma-1 (193 aa).

Ser-191 carries the phosphoserine modification.

Belongs to the adaptor complexes small subunit family. In terms of assembly, adaptor protein complex 3 (AP-3) is a heterotetramer composed of two large adaptins (delta-type subunit AP3D1 and beta-type subunit AP3B1 or AP3B2), a medium adaptin (mu-type subunit AP3M1 or AP3M2) and a small adaptin (sigma-type subunit APS1 or AP3S2). Interacts with AGAP1. AP-3 associates with the BLOC-1 complex.

The protein localises to the golgi apparatus. Its subcellular location is the cytoplasmic vesicle membrane. Part of the AP-3 complex, an adaptor-related complex which is not clathrin-associated. The complex is associated with the Golgi region as well as more peripheral structures. It facilitates the budding of vesicles from the Golgi membrane and may be directly involved in trafficking to lysosomes. In concert with the BLOC-1 complex, AP-3 is required to target cargos into vesicles assembled at cell bodies for delivery into neurites and nerve terminals. This Bos taurus (Bovine) protein is AP-3 complex subunit sigma-1 (AP3S1).